A 230-amino-acid polypeptide reads, in one-letter code: MAAAPLLLLLLLVPVPLLPLLAQGPGGALGNRHAVYWNSSNQHLRREGYTVQVNVNDYLDIYCPHYNSSGPGGGAEQYVLYMVNLSGYRTCNASQGSKRWECNRQHASHSPIKFSEKFQRYSAFSLGYEFHAGQEYYYISTPTHNLHWKCLRMKVFVCCASTSHSGEKPVPTLPQFTMGPNVKINVLEDFEGENPQVPKLEKSISGTSPKREHLPLAVGIAFFLMTLLAS.

An N-terminal signal peptide occupies residues 1–22 (MAAAPLLLLLLLVPVPLLPLLA). The Ephrin RBD domain maps to 30 to 161 (GNRHAVYWNS…RMKVFVCCAS (132 aa)). N-linked (GlcNAc...) asparagine glycans are attached at residues Asn38, Asn67, Asn84, and Asn92. Intrachain disulfides connect Cys63–Cys102 and Cys91–Cys150. Gly206 is lipidated: GPI-anchor amidated glycine. A propeptide spans 207 to 230 (TSPKREHLPLAVGIAFFLMTLLAS) (removed in mature form).

Belongs to the ephrin family. As to quaternary structure, interacts with EPHA8; activates EPHA8. Expressed in myogenic progenitor cells.

Its subcellular location is the cell membrane. Its function is as follows. Cell surface GPI-bound ligand for Eph receptors, a family of receptor tyrosine kinases which are crucial for migration, repulsion and adhesion during neuronal, vascular and epithelial development. Binds promiscuously Eph receptors residing on adjacent cells, leading to contact-dependent bidirectional signaling into neighboring cells. The signaling pathway downstream of the receptor is referred to as forward signaling while the signaling pathway downstream of the ephrin ligand is referred to as reverse signaling. The polypeptide is Ephrin-A3 (Efna3) (Mus musculus (Mouse)).